We begin with the raw amino-acid sequence, 359 residues long: MAWALAVILLPRLLAAAAAAAAVTSRGDVTVVCHDLETVEVTWGSGPDHHGANLSLEFRYGTGALQPCPRYFLSGAGVTSGCILPAARAGLLELALRDGGGAMVFKARQRASAWLKPRPPWNVTLLWTPDGDVTVSWPAHSYLGLDYEVQHRESNDDEDAWQTTSGPCCDLTVGGLDPARCYDFRVRASPRAAHYGLEAQPSEWTAVTRLSGAASAASCTASPAPSPALAPPLLPLGCGLAALLTLSLLLAALRLRRVKDALLPCVPDPSGSFPGLFEKHHGNFQAWIADAQATAPPARTEEEDDLIHPKAKRVEPEDGTSLCTVPRPPSFEPRGPGGGAMVSVGGATFMVGDSGYMTL.

An N-terminal signal peptide occupies residues 1-19 (MAWALAVILLPRLLAAAAA). Over 20–232 (AAAVTSRGDV…PAPSPALAPP (213 aa)) the chain is Extracellular. An N-linked (GlcNAc...) asparagine glycan is attached at N53. An intrachain disulfide couples C68 to C82. Positions 119–213 (PPWNVTLLWT…WTAVTRLSGA (95 aa)) constitute a Fibronectin type-III domain. N122 carries N-linked (GlcNAc...) asparagine glycosylation. Intrachain disulfides connect C168/C169 and C181/C219. Residues 201–205 (PSEWT) carry the WSXWS motif motif. A helical membrane pass occupies residues 233–253 (LLPLGCGLAALLTLSLLLAAL). At 254–359 (RLRRVKDALL…MVGDSGYMTL (106 aa)) the chain is on the cytoplasmic side. Residues 262-270 (LLPCVPDPS) carry the Box 1 motif motif. The interval 312–336 (KRVEPEDGTSLCTVPRPPSFEPRGP) is disordered.

This sequence belongs to the type I cytokine receptor family. Type 5 subfamily. As to quaternary structure, the TSLP receptor is a heterodimer of CRLF2 and IL7R. Binding of TSLP to CRLF2/TSLPR is a mechanistic prerequisite for recruitment of IL7R to the high-affinity ternary complex. In terms of tissue distribution, high level of expression in liver, lung and testis. Also expressed in heart, brain, spleen, thymus and bone marrow. Highly expressed in progenitors and myeloid cells. Isoform 2 is expressed in primary hemotopoietic cells.

It localises to the cell membrane. Its subcellular location is the secreted. In terms of biological role, receptor for thymic stromal lymphopoietin (TSLP). Forms a functional complex with TSLP and IL7R which is capable of stimulating cell proliferation through activation of STAT3 and STAT5. Also activates JAK2. Implicated in the development of the hematopoietic system. This chain is Cytokine receptor-like factor 2 (Crlf2), found in Mus musculus (Mouse).